The following is a 490-amino-acid chain: MRINPPTYGSEISSIEKKNRGCIVQIIGPVLDVAFPPGKMPNIYNALVVKGRDTEQMNVTCEVQQLLGNNRVRAVAMNDTDGLMRGMEVIDTGTPITVPVGGSTLGRIFNVLGEPVDNFGPVDTNTTSTIHRSAPAFIQLDTKLSIFETGIKVVDFLAPYRRGGKIGLFGGAGVGKTVLIMELINNIAKAHGGVSVFGGVGERTREGNDLYMEMKESGVINENNITESKVALVYGQMNEPPGARMRVGLTALTMAEYFRDVNEQDVLLFIDNIFRFVQAGSEVSALLGRMPSAVGYQPTLSTEMGSLQERITSTKEGSITSIQAVYVPADDLTDPAPATTFAHLDATTVLSRGLAAKGIYPAVDPLDSTSMMLQPRIVGEEHYETAQKVKQTLQRYKELQDIIAILGLDELSEEDRLTVARARKIERFLSQPFFVAEVFTGSPGKYVGLAETIRGFNLILSGELDSLPEQAFYLVGNIDEATEKAMNLKT.

An ATP-binding site is contributed by 170 to 177 (GGAGVGKT).

This sequence belongs to the ATPase alpha/beta chains family. As to quaternary structure, F-type ATPases have 2 components, CF(1) - the catalytic core - and CF(0) - the membrane proton channel. CF(1) has five subunits: alpha(3), beta(3), gamma(1), delta(1), epsilon(1). CF(0) has four main subunits: a(1), b(1), b'(1) and c(9-12).

It localises to the plastid membrane. It catalyses the reaction ATP + H2O + 4 H(+)(in) = ADP + phosphate + 5 H(+)(out). Produces ATP from ADP in the presence of a proton gradient across the membrane. The catalytic sites are hosted primarily by the beta subunits. In Cuscuta japonica (Japanese dodder), this protein is ATP synthase subunit beta, plastid (atpB).